We begin with the raw amino-acid sequence, 141 residues long: Elongation factor G, chloroplastic (141 aa).

Residues 12–141 (KDYRNIGIMA…VPRICFVNKM (130 aa)) form the tr-type G domain. GTP is bound by residues 21–28 (AHIDAGKT) and 85–89 (DTPGH).

This sequence belongs to the TRAFAC class translation factor GTPase superfamily. Classic translation factor GTPase family. EF-G/EF-2 subfamily.

The protein resides in the plastid. The protein localises to the chloroplast. It participates in protein biosynthesis; polypeptide chain elongation. Functionally, chloroplast-localized elongation factor EF-G involved in protein synthesis in plastids. Catalyzes the GTP-dependent ribosomal translocation step during translation elongation. During this step, the ribosome changes from the pre-translocational (PRE) to the post-translocational (POST) state as the newly formed A-site-bound peptidyl-tRNA and P-site-bound deacylated tRNA move to the P and E sites, respectively. Catalyzes the coordinated movement of the two tRNA molecules, the mRNA and conformational changes in the ribosome. This is Elongation factor G, chloroplastic (fusA) from Pisum sativum (Garden pea).